A 168-amino-acid chain; its full sequence is Phosphopantetheine adenylyltransferase (168 aa).

Ser-8 contacts substrate. ATP-binding positions include 8 to 9 (SF) and His-16. The substrate site is built by Lys-40, Thr-72, and Arg-86. ATP-binding positions include 87-89 (GLR), Glu-97, and 122-128 (YSFLSSS).

The protein belongs to the bacterial CoaD family. In terms of assembly, homohexamer. The cofactor is Mg(2+).

The protein resides in the cytoplasm. The enzyme catalyses (R)-4'-phosphopantetheine + ATP + H(+) = 3'-dephospho-CoA + diphosphate. The protein operates within cofactor biosynthesis; coenzyme A biosynthesis; CoA from (R)-pantothenate: step 4/5. Reversibly transfers an adenylyl group from ATP to 4'-phosphopantetheine, yielding dephospho-CoA (dPCoA) and pyrophosphate. This chain is Phosphopantetheine adenylyltransferase, found in Thermosynechococcus vestitus (strain NIES-2133 / IAM M-273 / BP-1).